The following is an 87-amino-acid chain: Serine rich endogenous peptide 17 (87 aa).

The N-terminal stretch at 1–28 is a signal peptide; the sequence is MTGKAPFFVILIAALLLLSSFFFGEVKA. Residues 32 to 87 form a disordered region; it reads KQPKHRKLGNREGDENRSNEIVVQMKARVKRSKSKRGPQKKEPYKKPPCSPPTHPA. A compositionally biased stretch (basic and acidic residues) spans 40–49; sequence GNREGDENRS. The SCOOP motif signature appears at 51–71; that stretch reads EIVVQMKARVKRSKSKRGPQK. Basic residues predominate over residues 58–69; sequence ARVKRSKSKRGP. Positions 63-65 match the SxS motif essential for MIK2 binding motif; it reads SKS. The span at 77–87 shows a compositional bias: pro residues; sequence KPPCSPPTHPA.

Belongs to the serine rich endogenous peptide (SCOOP) phytocytokine family. In terms of assembly, interacts with MIK2 (via extracellular leucine-rich repeat domain); this interaction triggers the formation of complex between MIK2 and the BAK1/SERK3 and SERK4 coreceptors, and subsequent BAK1 activation by phosphorylation.

Its subcellular location is the cell membrane. The protein resides in the secreted. It is found in the extracellular space. The protein localises to the apoplast. In terms of biological role, brassicaceae-specific phytocytokine (plant endogenous peptide released into the apoplast) perceived by MIK2 in a BAK1/SERK3 and SERK4 coreceptors-dependent manner, that modulates various physiological and antimicrobial processes including growth prevention and reactive oxygen species (ROS) response regulation. The chain is Serine rich endogenous peptide 17 from Arabidopsis thaliana (Mouse-ear cress).